The following is a 535-amino-acid chain: BAR/IMD domain-containing adapter protein 2 (535 aa).

Residues 1-250 (MSLSRSEEMH…AQLMQQMANS (250 aa)) form the IMD domain. Residues 1-251 (MSLSRSEEMH…QLMQQMANSN (251 aa)) are a coiled coil. Phosphoserine is present on residues S262, S324, S326, and S337. Residues 308–370 (SEDYNPWADR…TLPRSSSMAA (63 aa)) form a disordered region. The segment covering 321–335 (QPKSLSPPQSQSKLS) has biased composition (low complexity). T341 carries the post-translational modification Phosphothreonine. The residue at position 347 (S347) is a Phosphoserine. Positions 349 to 368 (TPKNSYATTENKTLPRSSSM) are enriched in polar residues. The residue at position 361 (T361) is a Phosphothreonine. S367, S385, S396, and S455 each carry phosphoserine. In terms of domain architecture, SH3 spans 375 to 438 (NGRMRVKAIF…PFSYTRVLDS (64 aa)). Residues 445-486 (HMSLQQGKSSSTGNLLDKDDLALPPPDYGTSSRAFPSQTAGT) are disordered. Polar residues-rich tracts occupy residues 447–458 (SLQQGKSSSTGN) and 473–486 (GTSSRAFPSQTAGT).

In terms of assembly, homodimer. Interacts with CDC42 and RAC1 that have been activated by GTP binding. Binds TIAM1. Interacts with ATN1, ADGRB1, DIAPH1, EPS8, SHANK1, SHANK2, SHANK3, WASF1 and WASF2. Interacts with ENAH after recruitment of CDC42. In terms of processing, phosphorylated on tyrosine residues by INSR in response to insulin treatment. In terms of tissue distribution, ubiquitous.

It localises to the cytoplasm. It is found in the membrane. The protein localises to the cell projection. Its subcellular location is the filopodium. The protein resides in the ruffle. It localises to the cytoskeleton. Functionally, adapter protein that links membrane-bound small G-proteins to cytoplasmic effector proteins. Necessary for CDC42-mediated reorganization of the actin cytoskeleton and for RAC1-mediated membrane ruffling. Involved in the regulation of the actin cytoskeleton by WASF family members and the Arp2/3 complex. Plays a role in neurite growth. Acts syngeristically with ENAH to promote filipodia formation. Plays a role in the reorganization of the actin cytoskeleton in response to bacterial infection. Participates in actin bundling when associated with EPS8, promoting filopodial protrusions. The sequence is that of BAR/IMD domain-containing adapter protein 2 (Baiap2) from Rattus norvegicus (Rat).